We begin with the raw amino-acid sequence, 515 residues long: Glucose-6-phosphate 1-dehydrogenase (515 aa).

N-acetylalanine is present on Ala-2. Ser-8 carries the post-translational modification Phosphoserine. Thr-10 carries the post-translational modification Phosphothreonine. Phe-26 carries the phosphoserine modification. Residues 38 to 45 (GASGDLAK) and Arg-72 each bind NADP(+). The residue at position 89 (Lys-89) is an N6-acetyllysine. NADP(+)-binding residues include Tyr-147 and Lys-171. Residues Lys-171, 201–205 (HYLGK), Glu-239, and Asp-258 contribute to the D-glucose 6-phosphate site. At Lys-171 the chain carries N6-(2-hydroxyisobutyryl)lysine; alternate. Lys-171 bears the N6-acetyllysine; alternate mark. His-263 functions as the Proton acceptor in the catalytic mechanism. Arg-357 is a binding site for NADP(+). Positions 360 and 365 each coordinate D-glucose 6-phosphate. NADP(+) contacts are provided by Lys-366, Arg-370, and Arg-393. Gln-395 lines the D-glucose 6-phosphate pocket. NADP(+)-binding positions include 401–403 (YTK) and 421–423 (DLT). The residue at position 403 (Lys-403) is an N6-acetyllysine. The residue at position 432 (Lys-432) is an N6-acetyllysine. Residue Arg-487 coordinates NADP(+). Lys-497 bears the N6-acetyllysine mark. Positions 503 and 509 each coordinate NADP(+). Tyr-503 bears the Phosphotyrosine mark.

This sequence belongs to the glucose-6-phosphate dehydrogenase family. As to quaternary structure, homotetramer; dimer of dimers. Interacts with SIRT2; the interaction is enhanced by H(2)O(2) treatment. Forms a ternary complex with ALDOB and TP53; this interaction is direct. ALDOB stabilizes the complex inhibiting G6PD activity and keeping oxidative pentose phosphate metabolism in check. Acetylated by ELP3 at Lys-403; acetylation inhibits its homodimerization and enzyme activity. Deacetylated by SIRT2 at Lys-403; deacetylation stimulates its enzyme activity. In terms of tissue distribution, isoform Long is found in lymphoblasts, granulocytes and sperm.

The protein localises to the cytoplasm. The protein resides in the cytosol. Its subcellular location is the membrane. It catalyses the reaction D-glucose 6-phosphate + NADP(+) = 6-phospho-D-glucono-1,5-lactone + NADPH + H(+). It functions in the pathway carbohydrate degradation; pentose phosphate pathway; D-ribulose 5-phosphate from D-glucose 6-phosphate (oxidative stage): step 1/3. Catalyzes the rate-limiting step of the oxidative pentose-phosphate pathway, which represents a route for the dissimilation of carbohydrates besides glycolysis. The main function of this enzyme is to provide reducing power (NADPH) and pentose phosphates for fatty acid and nucleic acid synthesis. In Homo sapiens (Human), this protein is Glucose-6-phosphate 1-dehydrogenase (G6PD).